The sequence spans 539 residues: GMP synthase [glutamine-hydrolyzing] (539 aa).

Residues 4-202 (KILILDFGSQ…VLQIAGAKPD (199 aa)) form the Glutamine amidotransferase type-1 domain. Catalysis depends on Cys81, which acts as the Nucleophile. Residues His176 and Glu178 contribute to the active site. One can recognise a GMPS ATP-PPase domain in the interval 203–395 (WIMKNHIEEA…LGLPPEMVYR (193 aa)). 230–236 (SGGVDSS) provides a ligand contact to ATP.

As to quaternary structure, homodimer.

It catalyses the reaction XMP + L-glutamine + ATP + H2O = GMP + L-glutamate + AMP + diphosphate + 2 H(+). Its pathway is purine metabolism; GMP biosynthesis; GMP from XMP (L-Gln route): step 1/1. Its function is as follows. Catalyzes the synthesis of GMP from XMP. The sequence is that of GMP synthase [glutamine-hydrolyzing] from Burkholderia orbicola (strain AU 1054).